We begin with the raw amino-acid sequence, 137 residues long: Small ribosomal subunit protein uS9 (137 aa).

Over residues 105-117 (LKIEGHLSRDPRA) the composition is skewed to basic and acidic residues. Residues 105-137 (LKIEGHLSRDPRAKERRKYGLKKARKAPQFSKR) are disordered. Positions 118–137 (KERRKYGLKKARKAPQFSKR) are enriched in basic residues.

Belongs to the universal ribosomal protein uS9 family.

The sequence is that of Small ribosomal subunit protein uS9 from Prochlorococcus marinus (strain MIT 9211).